Here is a 586-residue protein sequence, read N- to C-terminus: uncharacterized protein (586 aa).

Residues 1–115 are disordered; it reads MRVLVAETGR…NTEKLAGRDD (115 aa). Basic and acidic residues predominate over residues 8 to 20; sequence TGREDNVSVHSRE. Residues 21–31 are compositionally biased toward polar residues; sequence VSVNGSDSGTG. The span at 35–44 shows a compositional bias: basic and acidic residues; that stretch reads YKLETDDEHP. Over residues 76–107 the composition is skewed to polar residues; it reads TGMNTEYNDDNSSLVNTPRDSTTYAETNSPNT. 6 WD repeats span residues 184–223, 253–291, 293–333, 335–374, 387–430, and 432–474; these read QFKE…ERRE, GHNA…SLAV, RHNE…ILHW, ELEY…YVSS, CRVT…LVLK, and SDAH…LINA.

It is found in the cytoplasm. The protein localises to the nucleus. This is an uncharacterized protein from Schizosaccharomyces pombe (strain 972 / ATCC 24843) (Fission yeast).